The sequence spans 196 residues: Guanylate kinase (196 aa).

One can recognise a Guanylate kinase-like domain in the interval 8–189 (GKIIIISGPS…AADKLRHILY (182 aa)). 15 to 22 (GPSGVGKK) contacts ATP.

Belongs to the guanylate kinase family.

The protein localises to the cytoplasm. It carries out the reaction GMP + ATP = GDP + ADP. Essential for recycling GMP and indirectly, cGMP. The chain is Guanylate kinase from Malacoplasma penetrans (strain HF-2) (Mycoplasma penetrans).